Consider the following 569-residue polypeptide: Santalene synthase (569 aa).

The (2E)-geranyl diphosphate site is built by Arg-284, Asp-321, Asp-325, and Arg-460. Residues Asp-321 and Asp-325 each coordinate Mg(2+). A DDXXD motif motif is present at residues 321-325 (DDGYD). 3 residues coordinate Mg(2+): Asn-463, Thr-467, and Glu-471.

The protein belongs to the terpene synthase family. Tpsb subfamily. Mg(2+) is required as a cofactor. Requires Mn(2+) as cofactor.

It catalyses the reaction (2E,6E)-farnesyl diphosphate = (1S,5S,6R)-alpha-bergamotene + diphosphate. The catalysed reaction is (2E,6E)-farnesyl diphosphate = (+)-alpha-santalene + diphosphate. The enzyme catalyses (2E,6E)-farnesyl diphosphate = (-)-beta-santalene + diphosphate. Its function is as follows. Catalyzes a mixture of sesquiterpenoids from (2E,6E)-farnesyl diphosphate in fragrance biosynthesis. Catalyzes the formation of alpha-santalene, beta-santalene, epi-beta-santalene and exo-alpha-bergamotene, as well as traces of alpha-farnesene and beta-farnesene. Also acts with (Z,Z)-farnesyl diphosphate isomer, producing alpha-endo-bergamotene, alpha-santalene, (Z)-beta-farnesene, epi-beta-santalene, and beta-santalene. In Santalum album (White sandalwood), this protein is Santalene synthase.